We begin with the raw amino-acid sequence, 698 residues long: Protein SST2 (698 aa).

The tract at residues 10–203 is fungal-DR; it reads ELSSKNFSRT…GAKPNVWSPT (194 aa). At Ser252 the chain carries Phosphoserine. Residues 273–358 enclose the DEP domain; the sequence is SNAGIRLFEN…SRSSFFTLSK (86 aa). The residue at position 408 (Ser408) is a Phosphoserine. One can recognise an RGS domain in the interval 420–689; sequence KLDYVLTDPG…TQSDVYKDAS (270 aa). Ser539 carries the phosphoserine; by MAPK modification. Residues 545–586 are disordered; it reads FPTNLYDPSPASAESAASSISSTEADTLGEPPEVSLKPSKNL. The span at 551-570 shows a compositional bias: low complexity; it reads DPSPASAESAASSISSTEAD. Ser587 is subject to Phosphoserine.

Post-translationally, phosphorylated by FUS3 and KSS1.

Functionally, desensitization to alpha-factor pheromone. Is involved in regulating the signaling pathway for responding to mating pheromone. This is Protein SST2 (SST2) from Saccharomyces cerevisiae (strain ATCC 204508 / S288c) (Baker's yeast).